A 138-amino-acid chain; its full sequence is MRTLWIVAVCLIGVEGNLFQFAEMIVKMTGKEAVHSYAIYGCYCGWGGQGKPQDATDRCCFVHDCCYGTVNDCNPKMATYSYSFENGDIVCGDNNLCLKTVCECDRAAAICLGQNVNTYDKNYENYAISHCTEESEQC.

Residues 1-16 (MRTLWIVAVCLIGVEG) form the signal peptide. Disulfide bonds link cysteine 42–cysteine 131, cysteine 44–cysteine 60, cysteine 59–cysteine 111, cysteine 65–cysteine 138, cysteine 66–cysteine 104, cysteine 73–cysteine 97, and cysteine 91–cysteine 102. Ca(2+) contacts are provided by tyrosine 43, glycine 45, and glycine 47. Histidine 63 is a catalytic residue. Aspartate 64 is a Ca(2+) binding site. The active site involves aspartate 105.

It belongs to the phospholipase A2 family. Group II subfamily. D49 sub-subfamily. The cofactor is Ca(2+). As to expression, expressed by the venom gland.

The protein localises to the secreted. It carries out the reaction a 1,2-diacyl-sn-glycero-3-phosphocholine + H2O = a 1-acyl-sn-glycero-3-phosphocholine + a fatty acid + H(+). Snake venom phospholipase A2 (PLA2) that exhibits high hydrolytic activities and shows strong preference for the anionic micelles (dPPC with deoxycholate) to the zwitterionic micelles (dPPC with Triton X-100). PLA2 catalyzes the calcium-dependent hydrolysis of the 2-acyl groups in 3-sn-phosphoglycerides. The chain is Acidic phospholipase A2 Drk-a1 from Daboia russelii (Russel's viper).